The following is a 171-amino-acid chain: Adenine phosphoribosyltransferase (171 aa).

The protein belongs to the purine/pyrimidine phosphoribosyltransferase family. Homodimer.

The protein localises to the cytoplasm. It catalyses the reaction AMP + diphosphate = 5-phospho-alpha-D-ribose 1-diphosphate + adenine. It functions in the pathway purine metabolism; AMP biosynthesis via salvage pathway; AMP from adenine: step 1/1. Catalyzes a salvage reaction resulting in the formation of AMP, that is energically less costly than de novo synthesis. This chain is Adenine phosphoribosyltransferase, found in Syntrophotalea carbinolica (strain DSM 2380 / NBRC 103641 / GraBd1) (Pelobacter carbinolicus).